The following is a 127-amino-acid chain: Glycine cleavage system H protein (127 aa).

Residues Thr-22–Glu-104 form the Lipoyl-binding domain. Lys-63 is subject to N6-lipoyllysine.

It belongs to the GcvH family. The glycine cleavage system is composed of four proteins: P, T, L and H. (R)-lipoate is required as a cofactor.

Functionally, the glycine cleavage system catalyzes the degradation of glycine. The H protein shuttles the methylamine group of glycine from the P protein to the T protein. In terms of biological role, is also involved in protein lipoylation via its role as an octanoyl/lipoyl carrier protein intermediate. This is Glycine cleavage system H protein from Anoxybacillus flavithermus (strain DSM 21510 / WK1).